Here is a 171-residue protein sequence, read N- to C-terminus: Neudesin (171 aa).

A signal peptide spans 1-30; sequence MARPAPWWRLRLLAALVLALALVPVPSAWA. A Cytochrome b5 heme-binding domain is found at 43 to 128; the sequence is VRLFTEEELA…KELEALDDVF (86 aa). An N6-acetyllysine modification is found at K135.

It belongs to the cytochrome b5 family. MAPR subfamily. Interacts with PINK1 and PARK7. In the embryo, expressed most abundantly in brain and spinal cord. Widely expressed in adult tissues including brain, heart, lung and kidney. In brain, expressed in neurons but not in glial cells. In the hypothalamus is expressed primarily in the paraventricular nucleus (PVN), with lower levels of expression in the arcuate nucleus (ARC).

It localises to the secreted. Its subcellular location is the extracellular space. It is found in the mitochondrion. The protein resides in the endoplasmic reticulum. In terms of biological role, acts as a neurotrophic factor in postnatal mature neurons, enhancing neuronal survival. Promotes cell proliferation and neurogenesis in undifferentiated neural pro-genitor cells at the embryonic stage and inhibits differentiation of astrocytes. Its neurotrophic activity is exerted via MAPK1/ERK2, MAPK3/ERK1 and AKT1/AKT pathways. Neurotrophic activity is enhanced by binding to heme. Also acts as an anorexigenic neurotrophic factor that contributes to energy balance. The chain is Neudesin from Mus musculus (Mouse).